We begin with the raw amino-acid sequence, 428 residues long: Trigger factor (428 aa).

In terms of domain architecture, PPIase FKBP-type spans 166–250; sequence GDIVTFDFKG…IKNIKEKILP (85 aa).

Belongs to the FKBP-type PPIase family. Tig subfamily.

The protein localises to the cytoplasm. It catalyses the reaction [protein]-peptidylproline (omega=180) = [protein]-peptidylproline (omega=0). Involved in protein export. Acts as a chaperone by maintaining the newly synthesized protein in an open conformation. Functions as a peptidyl-prolyl cis-trans isomerase. The chain is Trigger factor from Mycoplasma capricolum subsp. capricolum (strain California kid / ATCC 27343 / NCTC 10154).